Here is a 131-residue protein sequence, read N- to C-terminus: Monothiol glutaredoxin-S6 (131 aa).

Positions 31-131 (SAFVQNAIYS…KLLGNSQSQR (101 aa)) constitute a Glutaredoxin domain. C51 is a binding site for [2Fe-2S] cluster.

The protein belongs to the glutaredoxin family. CPYC subfamily.

Its subcellular location is the cytoplasm. Functionally, may only reduce GSH-thiol disulfides, but not protein disulfides. The polypeptide is Monothiol glutaredoxin-S6 (GRXS6) (Oryza sativa subsp. japonica (Rice)).